The primary structure comprises 281 residues: CCAAT/enhancer-binding protein epsilon (281 aa).

A disordered region spans residues M1–L30. K121 participates in a covalent cross-link: Glycyl lysine isopeptide (Lys-Gly) (interchain with G-Cter in SUMO2). A Phosphoserine modification is found at S181. The 64-residue stretch at S204–I267 folds into the bZIP domain. The segment at R208–R228 is basic motif. Positions L230–L237 are leucine-zipper.

The protein belongs to the bZIP family. C/EBP subfamily. In terms of assembly, binds DNA as a homodimer and as a heterodimer. Can form stable heterodimers with CEBPA, CEBPB and CEBPD. Interacts with GATA1 and SPI1. Interacts with SMARCD2. Post-translationally, phosphorylated. In terms of tissue distribution, strongest expression occurs in promyelocyte and late-myeloblast-like cell lines.

The protein resides in the nucleus. In terms of biological role, transcriptional activator. C/EBP are DNA-binding proteins that recognize two different motifs: the CCAAT homology common to many promoters and the enhanced core homology common to many enhancers. Required for the promyelocyte-myelocyte transition in myeloid differentiation. In Homo sapiens (Human), this protein is CCAAT/enhancer-binding protein epsilon (CEBPE).